The primary structure comprises 71 residues: Biotinylated protein TB7.3 homolog (71 aa).

Positions 2-71 (AEDVRAEIVA…QAGDLIAVIS (70 aa)) constitute a Biotinyl-binding domain. Lysine 37 is modified (N6-biotinyllysine).

This Mycobacterium leprae (strain TN) protein is Biotinylated protein TB7.3 homolog.